Reading from the N-terminus, the 135-residue chain is ATP synthase epsilon chain (135 aa).

The tract at residues 84-107 is disordered; it reads SLSEEKQSEEQKQRLERAKKALSS. Residues 86–102 are compositionally biased toward basic and acidic residues; sequence SEEKQSEEQKQRLERAK.

The protein belongs to the ATPase epsilon chain family. F-type ATPases have 2 components, CF(1) - the catalytic core - and CF(0) - the membrane proton channel. CF(1) has five subunits: alpha(3), beta(3), gamma(1), delta(1), epsilon(1). CF(0) has three main subunits: a, b and c.

The protein localises to the cell membrane. Produces ATP from ADP in the presence of a proton gradient across the membrane. The chain is ATP synthase epsilon chain from Elusimicrobium minutum (strain Pei191).